A 185-amino-acid polypeptide reads, in one-letter code: MSKQILKDMETKADKTLHALKEELKTVRAGRANPSILDNIMVEYYGTSTPLKQVATISAPEARLLTIQPWDKSIMKEIEKQIQASNLGITPSNDGTIIRLPFPQLTEDRRKELTKVVKEYGEKSKVTIRSIRRDFVDDAKKMEKNAEISEDELHVLLDDIQSLTDKLTKEIDNIVTDKETELMEI.

This sequence belongs to the RRF family.

The protein localises to the cytoplasm. Its function is as follows. Responsible for the release of ribosomes from messenger RNA at the termination of protein biosynthesis. May increase the efficiency of translation by recycling ribosomes from one round of translation to another. This is Ribosome-recycling factor from Finegoldia magna (strain ATCC 29328 / DSM 20472 / WAL 2508) (Peptostreptococcus magnus).